Here is a 707-residue protein sequence, read N- to C-terminus: Eomesodermin homolog (707 aa).

The segment covering 27–42 has biased composition (gly residues); it reads GGGGGGGGGGGGGGGS. Residues 27-125 form a disordered region; sequence GGGGGGGGGG…GSPCAEEELP (99 aa). Over residues 73–93 the composition is skewed to low complexity; that stretch reads AGSAEPAGAGAGAPAAMLSDA. Position 117 is a phosphoserine (Ser117). A DNA-binding region (T-box) is located at residues 278–458; that stretch reads LWLKFHRHQT…HNPFAKGFRD (181 aa). The residue at position 473 (Thr473) is a Phosphothreonine. The tract at residues 592-707 is required for transcription activation; sequence AMAGWGGRGA…GAYYAFYTSP (116 aa). Positions 642–689 are disordered; sequence TPPSIKSLDSSDSGVYNSACKRKRLSPSTPSNGNSPPIKCEDINTEEY. The segment covering 648 to 657 has biased composition (polar residues); it reads SLDSSDSGVY. Positions 667-678 are enriched in low complexity; the sequence is SPSTPSNGNSPP. A compositionally biased stretch (basic and acidic residues) spans 680-689; sequence KCEDINTEEY.

In terms of tissue distribution, expressed in CD8+ T-cells.

It is found in the nucleus. Functionally, functions as a transcriptional activator playing a crucial role during development. Functions in trophoblast differentiation and later in gastrulation, regulating both mesoderm delamination and endoderm specification. Plays a role in brain development being required for the specification and the proliferation of the intermediate progenitor cells and their progeny in the cerebral cortex. Required for differentiation and migration of unipolar dendritic brush cells. Also involved in the differentiation of CD8+ T-cells during immune response regulating the expression of lytic effector genes. In Mus musculus (Mouse), this protein is Eomesodermin homolog (Eomes).